The primary structure comprises 354 residues: Glucose 1-dehydrogenase (354 aa).

A disordered region spans residues Met-1–Glu-27. Residues Thr-7–Ser-22 show a composition bias toward basic and acidic residues. Asp-38 lines the Zn(2+) pocket. Thr-40 contacts substrate. His-63 and Glu-64 together coordinate Zn(2+). Residues Pro-91–Gly-110 are disordered. Substrate is bound by residues Glu-114 and Glu-150. Glu-150 provides a ligand contact to Zn(2+). NADP(+) contacts are provided by residues Asn-181–Leu-184, Arg-204–Arg-205, Leu-269–Ile-271, and Thr-298–Asn-300. Asn-300 lines the substrate pocket.

It belongs to the zinc-containing alcohol dehydrogenase family. Glucose 1-dehydrogenase subfamily. The cofactor is Zn(2+).

It carries out the reaction D-glucose + NAD(+) = D-glucono-1,5-lactone + NADH + H(+). It catalyses the reaction D-glucose + NADP(+) = D-glucono-1,5-lactone + NADPH + H(+). In terms of biological role, catalyzes the NAD(P)(+)-dependent oxidation of D-glucose to D-gluconate via gluconolactone. Can utilize both NAD(+) and NADP(+) as electron acceptor. Is involved in the degradation of glucose through a modified Entner-Doudoroff pathway. This Haloarcula marismortui (strain ATCC 43049 / DSM 3752 / JCM 8966 / VKM B-1809) (Halobacterium marismortui) protein is Glucose 1-dehydrogenase.